The primary structure comprises 328 residues: Biotin synthase (328 aa).

A Radical SAM core domain is found at 41 to 260 (TAIETASLLS…VALARILMPA (220 aa)). C56, C60, and C63 together coordinate [4Fe-4S] cluster. Residues C100, C131, C191, and R264 each coordinate [2Fe-2S] cluster.

Belongs to the radical SAM superfamily. Biotin synthase family. As to quaternary structure, homodimer. The cofactor is [4Fe-4S] cluster. [2Fe-2S] cluster serves as cofactor.

It catalyses the reaction (4R,5S)-dethiobiotin + (sulfur carrier)-SH + 2 reduced [2Fe-2S]-[ferredoxin] + 2 S-adenosyl-L-methionine = (sulfur carrier)-H + biotin + 2 5'-deoxyadenosine + 2 L-methionine + 2 oxidized [2Fe-2S]-[ferredoxin]. It functions in the pathway cofactor biosynthesis; biotin biosynthesis; biotin from 7,8-diaminononanoate: step 2/2. Catalyzes the conversion of dethiobiotin (DTB) to biotin by the insertion of a sulfur atom into dethiobiotin via a radical-based mechanism. In Cereibacter sphaeroides (strain ATCC 17029 / ATH 2.4.9) (Rhodobacter sphaeroides), this protein is Biotin synthase.